Reading from the N-terminus, the 1349-residue chain is Indole-3-acetaldehyde oxidase (1349 aa).

The 88-residue stretch at 7 to 94 (AAVVLAVNGK…RCSVTTSEGI (88 aa)) folds into the 2Fe-2S ferredoxin-type domain. The [2Fe-2S] cluster site is built by Cys-46, Cys-51, and Cys-54. The FAD-binding PCMH-type domain occupies 237-415 (VPVSDDGWYR…LSIFIPEWGS (179 aa)).

The protein belongs to the xanthine dehydrogenase family. Aldehyde oxidases (AO) are homodimers and heterodimers of AO subunits. The cofactor is [2Fe-2S] cluster. FAD serves as cofactor. It depends on Mo-molybdopterin as a cofactor. In terms of tissue distribution, mostly expressed in coleoptiles, and, to a lower extent, in mesocotyl and roots.

Its subcellular location is the cytoplasm. It carries out the reaction indole-3-acetaldehyde + O2 + H2O = (indol-3-yl)acetate + H2O2 + H(+). In higher plants aldehyde oxidases (AO) appear to be homo- and heterodimeric assemblies of AO subunits with probably different physiological functions. Involved in the biosynthesis of auxin. The protein is Indole-3-acetaldehyde oxidase (AO2) of Zea mays (Maize).